A 273-amino-acid polypeptide reads, in one-letter code: MAIHLYKTSTPSTRNGAVDSQVKSNTRKNLIYGQPRCSKGRNARGIITAGHRGGGHKRLYRKIDFRRNERDIYGRIVSIEYDPNRNASICLIHYGDGEKRYILHPRGAIIGDTIVSGTEVPIKMGNALPLKMPLGTALHNIEITLGKGGQLARAAGAVAKLIAKEGKSATLKLPSGEVRLISNNCSATVGQVGNVGVNQKSLGRAGSKRWLGKRPVVRGVVMNPVDHPHGGGEGRAPIGRKKPATPWGYPALGRRSRKRNKYSENLILRRRSK.

2 disordered regions span residues methionine 1 to lysine 23 and asparagine 223 to lysine 273.

It belongs to the universal ribosomal protein uL2 family. In terms of assembly, part of the 50S ribosomal subunit.

It localises to the plastid. It is found in the chloroplast. This Oenothera argillicola (Appalachian evening primrose) protein is Large ribosomal subunit protein uL2cz/uL2cy (rpl2-A).